Here is a 394-residue protein sequence, read N- to C-terminus: Phosphoglycerate kinase (394 aa).

Substrate-binding positions include aspartate 21 to asparagine 23, arginine 37, histidine 60 to arginine 63, arginine 119, and arginine 152. Residues lysine 202, glutamate 324, and glycine 350–serine 353 contribute to the ATP site.

This sequence belongs to the phosphoglycerate kinase family. As to quaternary structure, monomer.

It localises to the cytoplasm. The catalysed reaction is (2R)-3-phosphoglycerate + ATP = (2R)-3-phospho-glyceroyl phosphate + ADP. The protein operates within carbohydrate degradation; glycolysis; pyruvate from D-glyceraldehyde 3-phosphate: step 2/5. This chain is Phosphoglycerate kinase, found in Carboxydothermus hydrogenoformans (strain ATCC BAA-161 / DSM 6008 / Z-2901).